The sequence spans 754 residues: Polyadenylate-binding protein, cytoplasmic and nuclear (754 aa).

Over residues 1–25 (MSAEVSTTPAADNVNGTPEATNAAA) the composition is skewed to polar residues. Residues 1–52 (MSAEVSTTPAADNVNGTPEATNAAATSAPEVTAVESSSPTSPNNNNQPHSAS) form a disordered region. Residues 36–46 (SSSPTSPNNNN) show a composition bias toward low complexity. RRM domains are found at residues 51 to 129 (ASLY…WSQR), 139 to 216 (GNVF…HHIS), 232 to 309 (TNIY…RAQK), and 335 to 465 (VNLY…LAQR). 2 disordered regions span residues 365-420 (KVMR…KKSD) and 595-648 (RGGG…EEAP). A compositionally biased stretch (basic and acidic residues) spans 366-420 (VMRDSTPAERTETPDSEKEKEVNKENEKKEDEEKAAEEKPKESDEEKKDETKKSD). Over residues 610-633 (GMRGPGYQGRGGPQGGPRPQGGRG) the composition is skewed to gly residues. Low complexity predominate over residues 634–648 (QNAAAQPAAGREEAP). The 78-residue stretch at 649-726 (AGALTAQALN…ALSVYDEYMK (78 aa)) folds into the PABC domain. The segment at 729–754 (GEGEAPADADKPKEAAKETATEENKS) is disordered.

It belongs to the polyadenylate-binding protein type-1 family.

It is found in the cytoplasm. It localises to the nucleus. Functionally, binds the poly(A) tail of mRNA. Appears to be an important mediator of the multiple roles of the poly(A) tail in mRNA biogenesis, stability and translation. In the nucleus, involved in both mRNA cleavage and polyadenylation. Is also required for efficient mRNA export to the cytoplasm. Acts in concert with a poly(A)-specific nuclease (PAN) to affect poly(A) tail shortening, which may occur concomitantly with either nucleocytoplasmic mRNA transport or translational initiation. In the cytoplasm, stimulates translation initiation and regulates mRNA decay through translation termination-coupled poly(A) shortening, probably mediated by PAN. The sequence is that of Polyadenylate-binding protein, cytoplasmic and nuclear (pab1) from Aspergillus clavatus (strain ATCC 1007 / CBS 513.65 / DSM 816 / NCTC 3887 / NRRL 1 / QM 1276 / 107).